A 173-amino-acid polypeptide reads, in one-letter code: dCTP deaminase, dUMP-forming (173 aa).

DCTP-binding positions include 93–98 (RSSIGR), Asp111, 119–121 (TLE), Gln138, and Tyr151. Glu121 serves as the catalytic Proton donor/acceptor.

Belongs to the dCTP deaminase family. In terms of assembly, homotrimer.

It catalyses the reaction dCTP + 2 H2O = dUMP + NH4(+) + diphosphate. It participates in pyrimidine metabolism; dUMP biosynthesis; dUMP from dCTP: step 1/1. In terms of biological role, bifunctional enzyme that catalyzes both the deamination of dCTP to dUTP and the hydrolysis of dUTP to dUMP without releasing the toxic dUTP intermediate. The polypeptide is dCTP deaminase, dUMP-forming (Clostridium acetobutylicum (strain ATCC 824 / DSM 792 / JCM 1419 / IAM 19013 / LMG 5710 / NBRC 13948 / NRRL B-527 / VKM B-1787 / 2291 / W)).